Reading from the N-terminus, the 379-residue chain is Protein PatA (379 aa).

The interval 181-226 (RREASSQEISSSTEHNQIPVNNRRSTKFTSPPHTQPKPEPRLPQIN) is disordered. Over residues 186 to 212 (SQEISSSTEHNQIPVNNRRSTKFTSPP) the composition is skewed to polar residues. Positions 262–378 (TIFCIDENPI…DLLKVIFKHI (117 aa)) constitute a Response regulatory domain. A 4-aspartylphosphate modification is found at Asp-313.

It is found in the cell septum. Its function is as follows. Controls heterocyst pattern formation. Required for the differentiation of intercalary heterocysts but not for terminal heterocysts. The protein is Protein PatA (patA) of Nostoc sp. (strain PCC 7120 / SAG 25.82 / UTEX 2576).